The chain runs to 104 residues: L-rhamnose mutarotase (104 aa).

Residue Tyr18 participates in substrate binding. The active-site Proton donor is the His22. Substrate contacts are provided by residues Tyr41 and 76–77; that span reads WW.

It belongs to the rhamnose mutarotase family. In terms of assembly, homodimer.

The protein resides in the cytoplasm. It carries out the reaction alpha-L-rhamnose = beta-L-rhamnose. It functions in the pathway carbohydrate metabolism; L-rhamnose metabolism. Its function is as follows. Involved in the anomeric conversion of L-rhamnose. This Burkholderia ambifaria (strain ATCC BAA-244 / DSM 16087 / CCUG 44356 / LMG 19182 / AMMD) (Burkholderia cepacia (strain AMMD)) protein is L-rhamnose mutarotase.